A 275-amino-acid polypeptide reads, in one-letter code: Autophagy protein 5 (275 aa).

The residue at position 1 (methionine 1) is an N-acetylmethionine. A Glycyl lysine isopeptide (Lys-Gly) (interchain with G-Cter in ATG12) cross-link involves residue lysine 130.

It belongs to the ATG5 family. Forms a conjugate with ATG12. Part of the minor complex composed of 4 sets of ATG12-ATG5 and ATG16L1 (400 kDa); this complex interacts with ATG3 leading to disruption of ATG7 interaction and promotion of ATG8-like proteins lipidation. Forms an 800-kDa complex composed of ATG12-ATG5 and ATG16L2. The ATG12-ATG5 conjugate interacts with RAB33A; this interaction is bridged by ATG16L1 and promotes ATG12-ATG5-ATG16L1 complex recruitment to phagophores. Interacts with TECPR1; the interaction is direct and does not take place when ATG16L1 is associated with the ATG5-ATG12 conjugate. Interacts with DHX58/RIG-1, IFIH1/MDA5 and MAVS/IPS-1 in monomeric form as well as in ATG12-ATG5 conjugate form. The interaction with MAVS is further enhanced upon vesicular stomatitis virus (VSV) infection. Interacts with ATG3. Interacts with ATG7 and ATG10. Interacts with FADD. Interacts with Bassoon/BSN; this interaction is important for the regulation of presynaptic autophagy. Interacts with ATG16L2. Post-translationally, conjugated to ATG12; which is essential for autophagy, but is not required for association with isolation membrane. Acetylated by EP300.

Its subcellular location is the cytoplasm. It localises to the preautophagosomal structure membrane. Functionally, involved in autophagic vesicle formation. Conjugation with ATG12, through a ubiquitin-like conjugating system involving ATG7 as an E1-like activating enzyme and ATG10 as an E2-like conjugating enzyme, is essential for its function. The ATG12-ATG5 conjugate acts as an E3-like enzyme which is required for lipidation of ATG8 family proteins and their association to the vesicle membranes. Involved in mitochondrial quality control after oxidative damage, and in subsequent cellular longevity. Plays a critical role in multiple aspects of lymphocyte development and is essential for both B and T lymphocyte survival and proliferation. Required for optimal processing and presentation of antigens for MHC II. Involved in the maintenance of axon morphology and membrane structures, as well as in normal adipocyte differentiation. Promotes primary ciliogenesis through removal of OFD1 from centriolar satellites and degradation of IFT20 via the autophagic pathway. As part of the ATG8 conjugation system with ATG12 and ATG16L1, required for recruitment of LRRK2 to stressed lysosomes and induction of LRRK2 kinase activity in response to lysosomal stress. In terms of biological role, may play an important role in the apoptotic process, possibly within the modified cytoskeleton. Its expression is a relatively late event in the apoptotic process, occurring downstream of caspase activity. Plays a crucial role in IFN-gamma-induced autophagic cell death by interacting with FADD. The sequence is that of Autophagy protein 5 from Bos taurus (Bovine).